Consider the following 37-residue polypeptide: Large ribosomal subunit protein bL36c (37 aa).

The protein belongs to the bacterial ribosomal protein bL36 family.

The protein resides in the plastid. It localises to the chloroplast. This chain is Large ribosomal subunit protein bL36c, found in Cyanidioschyzon merolae (strain NIES-3377 / 10D) (Unicellular red alga).